The chain runs to 58 residues: ATP synthase F(0) complex subunit k, mitochondrial (58 aa).

Residues Lys16 and Lys17 each carry the N6-acetyllysine modification. A helical membrane pass occupies residues 23–45 (TLTGRMNCVLATYGGIALLVLYF).

Component of the ATP synthase complex composed at least of ATP5F1A/subunit alpha, ATP5F1B/subunit beta, ATP5MC1/subunit c (homooctomer), MT-ATP6/subunit a, MT-ATP8/subunit 8, ATP5ME/subunit e, ATP5MF/subunit f, ATP5MG/subunit g, ATP5MK/subunit k, ATP5MJ/subunit j, ATP5F1C/subunit gamma, ATP5F1D/subunit delta, ATP5F1E/subunit epsilon, ATP5PF/subunit F6, ATP5PB/subunit b, ATP5PD/subunit d, ATP5PO/subunit OSCP. ATP synthase complex consists of a soluble F(1) head domain (subunits alpha(3) and beta(3)) - the catalytic core - and a membrane F(0) domain - the membrane proton channel (subunits c, a, 8, e, f, g, k and j). These two domains are linked by a central stalk (subunits gamma, delta, and epsilon) rotating inside the F1 region and a stationary peripheral stalk (subunits F6, b, d, and OSCP). The ATP synthase complex/complex V exists as a monomeric and a dimeric supercomplex that helps shape mitochondrial cristae to optimize proton flow. Ubiquitous. Highly expressed in skeletal and cardiac muscle. Moderately expressed in brain, thymus, stomach and testis. Lowest expression levels were detected in lung, liver, kidney, adrenal gland, spleen, small intestine and adipose tissue. In streptozotocin-induced diabetes, the insulin-sensitive tissues skeletal and cardiac muscle were down-regulated.

It is found in the mitochondrion membrane. Its function is as follows. Subunit k, of the mitochondrial membrane ATP synthase complex (F(1)F(0) ATP synthase or Complex V) that produces ATP from ADP in the presence of a proton gradient across the membrane which is generated by electron transport complexes of the respiratory chain. ATP synthase complex consist of a soluble F(1) head domain - the catalytic core - and a membrane F(1) domain - the membrane proton channel. These two domains are linked by a central stalk rotating inside the F(1) region and a stationary peripheral stalk. During catalysis, ATP synthesis in the catalytic domain of F(1) is coupled via a rotary mechanism of the central stalk subunits to proton translocation. In vivo, can only synthesize ATP although its ATP hydrolase activity can be activated artificially in vitro. Part of the complex F(0) domain. Required for dimerization of the ATP synthase complex and as such regulates ATP synthesis in the mitochondria. The sequence is that of ATP synthase F(0) complex subunit k, mitochondrial (Atp5mk) from Rattus norvegicus (Rat).